The sequence spans 475 residues: Lipid II flippase MurJ (475 aa).

The Cytoplasmic portion of the chain corresponds to 1 to 2 (MS). Residues 3-23 (ILFSSILFSIATFFSRILGLF) form a helical membrane-spanning segment. The Periplasmic portion of the chain corresponds to 24-35 (RDVLFAKYFGVS). Residues 36–56 (YELDAYFIAIMFPFFLRKVFG) form a helical membrane-spanning segment. The Cytoplasmic portion of the chain corresponds to 57 to 78 (EGAMSSAFVPLYSEKSGEEKDK). The chain crosses the membrane as a helical span at residues 79–99 (FLSSVINGFSLIILALVILSY). Topologically, residues 100–123 (FFPELIINLFGAGSSHETKILAKK) are periplasmic. The helical transmembrane segment at 124-144 (LLLITSPSIYFIFLWAISYSI) threads the bilayer. Residues 145–150 (LNTNNK) are Cytoplasmic-facing. Residues 151 to 171 (FFWPALTPSISNITIIIGTFL) traverse the membrane as a helical segment. Residues 172–175 (STKY) are Periplasmic-facing. Residues 176 to 196 (GIISPTIGFLIGSILMFFSII) form a helical membrane-spanning segment. The Cytoplasmic segment spans residues 197–213 (KSIIKHKYYFTIKHFPH). Residues 214-238 (FLKLFFPTFMTMVVSQINTVVDMNV) form a helical membrane-spanning segment. The Periplasmic portion of the chain corresponds to 239–249 (VSFYDKGSISY). A helical transmembrane segment spans residues 250–271 (LQYASRFYLLPYGLFAVSVSTV). Topologically, residues 272–287 (VLSKISNDRKNFNYHL) are cytoplasmic. The helical transmembrane segment at 288–308 (NDALKTTLFFTIPSMVGLIFL) threads the bilayer. Over 309 to 332 (STPIIRFFYEHGAFTSKDTLITSK) the chain is Periplasmic. A helical transmembrane segment spans residues 333-353 (ILIAYTLGLPFYGIYSTISRS). The Cytoplasmic segment spans residues 354 to 362 (YHAIKNTKT). The helical transmembrane segment at 363–383 (PFIAATIVSLSNIILDIIFGL) threads the bilayer. Residues 384–386 (KYG) are Periplasmic-facing. The chain crosses the membrane as a helical span at residues 387 to 407 (PIGVALATSIAGIIGVLYLLF). At 408–416 (SVKTFPIKD) the chain is on the cytoplasmic side. The chain crosses the membrane as a helical span at residues 417–437 (FLKISLNSLIMLFVIYLTDFT). At 438–440 (DNE) the chain is on the periplasmic side. Residues 441-461 (FWFLIQILIGILVYLIFSSIF) traverse the membrane as a helical segment. Over 462-475 (YRDLIRRFLYARKK) the chain is Cytoplasmic.

It belongs to the MurJ/MviN family.

It is found in the cell inner membrane. It functions in the pathway cell wall biogenesis; peptidoglycan biosynthesis. Its function is as follows. Involved in peptidoglycan biosynthesis. Transports lipid-linked peptidoglycan precursors from the inner to the outer leaflet of the cytoplasmic membrane. The polypeptide is Lipid II flippase MurJ (Thermosipho africanus (strain TCF52B)).